The following is a 298-amino-acid chain: Tyrosine recombinase XerC (298 aa).

The Core-binding (CB) domain maps to 2–88 (TDLHTDVERY…ALRSFFDWLV (87 aa)). One can recognise a Tyr recombinase domain in the interval 109-288 (HLPKNIDVDD…DFQHLASVYD (180 aa)). Active-site residues include arginine 148, lysine 172, histidine 240, arginine 243, and histidine 266. Tyrosine 275 acts as the O-(3'-phospho-DNA)-tyrosine intermediate in catalysis.

Belongs to the 'phage' integrase family. XerC subfamily. Forms a cyclic heterotetrameric complex composed of two molecules of XerC and two molecules of XerD, in which XerC interacts with XerD via its C-terminal region, XerD interacts with XerC via its C-terminal region and so on.

The protein localises to the cytoplasm. With respect to regulation, ftsK may regulate the catalytic switch between XerC and XerD in the heterotetrameric complex during the two steps of the recombination process. Functionally, site-specific tyrosine recombinase, which acts by catalyzing the cutting and rejoining of the recombining DNA molecules. Binds cooperatively to specific DNA consensus sequences that are separated from XerD binding sites by a short central region, forming the heterotetrameric XerC-XerD complex that recombines DNA substrates. The complex is essential to convert dimers of the bacterial chromosome into monomers to permit their segregation at cell division. It also contributes to the segregational stability of plasmids. In the complex XerC specifically exchanges the top DNA strands. The protein is Tyrosine recombinase XerC of Escherichia coli O127:H6 (strain E2348/69 / EPEC).